A 173-amino-acid chain; its full sequence is uncharacterized protein (173 aa).

Belongs to the ycf73 family.

The protein localises to the plastid. It is found in the chloroplast. This is an uncharacterized protein from Saccharum hybrid (Sugarcane).